Consider the following 603-residue polypeptide: UvrABC system protein C (603 aa).

In terms of domain architecture, GIY-YIG spans 15–92; it reads DQPGCYLMKD…IKKHDPRFNI (78 aa). The UVR domain occupies 197-232; it reads KTVKNDLMKKMQEAAENMEFEKAGEFRDQINAIETT.

This sequence belongs to the UvrC family. In terms of assembly, interacts with UvrB in an incision complex.

The protein resides in the cytoplasm. In terms of biological role, the UvrABC repair system catalyzes the recognition and processing of DNA lesions. UvrC both incises the 5' and 3' sides of the lesion. The N-terminal half is responsible for the 3' incision and the C-terminal half is responsible for the 5' incision. The chain is UvrABC system protein C from Listeria monocytogenes serovar 1/2a (strain ATCC BAA-679 / EGD-e).